We begin with the raw amino-acid sequence, 369 residues long: Choline-phosphate cytidylyltransferase B (369 aa).

The tract at residues 1-27 (MPVVTTDAESETGIPKSLSNEPPSETM) is disordered. I84, F85, H92, and K122 together coordinate CTP. 2 residues coordinate phosphocholine: K122 and W151. CTP is bound by residues H168, D169, Y173, Q195, R196, T197, and I200. The tract at residues 309-369 (RMLQALSPKQ…SMSEGDEDEK (61 aa)) is disordered. A phosphoserine mark is found at S315, S319, S322, S323, S329, S331, and S335. Over residues 319–339 (SPVSSPTRSRSPSRSPSPTFS) the composition is skewed to low complexity. Position 345 is a phosphothreonine (T345). Phosphoserine occurs at positions 346, 349, 350, 355, 360, and 362. Low complexity predominate over residues 351-362 (PKAASASISSMS).

The protein belongs to the cytidylyltransferase family. Homodimer. Post-translationally, phosphorylated. In terms of processing, extensively phosphorylated. In terms of tissue distribution, highly expressed in testis, placenta, brain, ovary, liver and fetal lung. Expressed in brain, liver and fetal lung.

The protein resides in the cytoplasm. The protein localises to the endoplasmic reticulum. The catalysed reaction is phosphocholine + CTP + H(+) = CDP-choline + diphosphate. It functions in the pathway phospholipid metabolism; phosphatidylcholine biosynthesis; phosphatidylcholine from phosphocholine: step 1/2. Catalyzes the key rate-limiting step in the CDP-choline pathway for phosphatidylcholine biosynthesis. The sequence is that of Choline-phosphate cytidylyltransferase B (PCYT1B) from Homo sapiens (Human).